The chain runs to 230 residues: UPF0173 metal-dependent hydrolase Dshi_2788 (230 aa).

It belongs to the UPF0173 family.

This Dinoroseobacter shibae (strain DSM 16493 / NCIMB 14021 / DFL 12) protein is UPF0173 metal-dependent hydrolase Dshi_2788.